The chain runs to 311 residues: Bifunctional protein FolD (311 aa).

Position 174-176 (174-176) interacts with NADP(+); it reads GKG.

Belongs to the tetrahydrofolate dehydrogenase/cyclohydrolase family. In terms of assembly, homodimer.

The catalysed reaction is (6R)-5,10-methylene-5,6,7,8-tetrahydrofolate + NADP(+) = (6R)-5,10-methenyltetrahydrofolate + NADPH. It carries out the reaction (6R)-5,10-methenyltetrahydrofolate + H2O = (6R)-10-formyltetrahydrofolate + H(+). The protein operates within one-carbon metabolism; tetrahydrofolate interconversion. Functionally, catalyzes the oxidation of 5,10-methylenetetrahydrofolate to 5,10-methenyltetrahydrofolate and then the hydrolysis of 5,10-methenyltetrahydrofolate to 10-formyltetrahydrofolate. This Pyrobaculum islandicum (strain DSM 4184 / JCM 9189 / GEO3) protein is Bifunctional protein FolD.